Consider the following 396-residue polypeptide: Cathepsin D (396 aa).

Positions 1 to 18 (MKFLYLFLFAVFAWTSDA) are cleaved as a signal peptide. The propeptide at 19-61 (IVRIPLKKFRSIRRTLSDSGLNVEQLLAGTNSLQHNQGFPSSN) is activation peptide. The Peptidase A1 domain occupies 76 to 393 (YYGEIGLGTP…DRESNRVGFA (318 aa)). D94 is a catalytic residue. Residues C107 and C114 are joined by a disulfide bond. N131 carries an N-linked (GlcNAc...) asparagine glycan. A disulfide bond links C272 and C276. D281 is a catalytic residue. An intrachain disulfide couples C315 to C352.

The protein belongs to the peptidase A1 family. Monomer.

Its subcellular location is the lysosome. It catalyses the reaction Specificity similar to, but narrower than, that of pepsin A. Does not cleave the 4-Gln-|-His-5 bond in B chain of insulin.. Inhibited by pepstatin. Acid protease active in intracellular protein breakdown. This is Cathepsin D (ctsd) from Clupea harengus (Atlantic herring).